Here is a 226-residue protein sequence, read N- to C-terminus: Ribosomal RNA small subunit methyltransferase G (226 aa).

S-adenosyl-L-methionine is bound by residues glycine 86, leucine 91, 137 to 138 (VE), and arginine 150.

It belongs to the methyltransferase superfamily. RNA methyltransferase RsmG family.

The protein localises to the cytoplasm. It carries out the reaction guanosine(527) in 16S rRNA + S-adenosyl-L-methionine = N(7)-methylguanosine(527) in 16S rRNA + S-adenosyl-L-homocysteine. Specifically methylates the N7 position of guanine in position 527 of 16S rRNA. This is Ribosomal RNA small subunit methyltransferase G from Polaromonas sp. (strain JS666 / ATCC BAA-500).